Here is a 331-residue protein sequence, read N- to C-terminus: D-alanine--D-alanine ligase (331 aa).

In terms of domain architecture, ATP-grasp spans 122–328 (KLWYDAIGIP…FHEFLADCIE (207 aa)). 152–207 (AFDKWGKLFVKAARQGSSVGCYSVTNIEQLSDAIDKAFGFSHQVLVEKAVKPRELE) contacts ATP. Residues Asp-282, Glu-295, and Asn-297 each contribute to the Mg(2+) site.

Belongs to the D-alanine--D-alanine ligase family. The cofactor is Mg(2+). It depends on Mn(2+) as a cofactor.

The protein localises to the cytoplasm. The enzyme catalyses 2 D-alanine + ATP = D-alanyl-D-alanine + ADP + phosphate + H(+). It functions in the pathway cell wall biogenesis; peptidoglycan biosynthesis. Functionally, cell wall formation. The chain is D-alanine--D-alanine ligase from Vibrio vulnificus (strain YJ016).